The chain runs to 312 residues: Ribosomal protein L11 methyltransferase (312 aa).

S-adenosyl-L-methionine contacts are provided by threonine 162, glycine 183, aspartate 205, and asparagine 248.

It belongs to the methyltransferase superfamily. PrmA family.

Its subcellular location is the cytoplasm. It carries out the reaction L-lysyl-[protein] + 3 S-adenosyl-L-methionine = N(6),N(6),N(6)-trimethyl-L-lysyl-[protein] + 3 S-adenosyl-L-homocysteine + 3 H(+). Methylates ribosomal protein L11. The sequence is that of Ribosomal protein L11 methyltransferase from Bacillus cereus (strain Q1).